A 1641-amino-acid chain; its full sequence is MRDRVAMMLRPLVRGWIPRAVLLLTVAFSFGCNRNHNGQLPQSSGEPVAVAKEPVKGFVLVRAYPDQHDGELALALEFSQPLAATQEFDTLVRLEQGSGNHDGGWSLSDDAKTLRYPYVEADKHYTVLISGDLLAATGSRLGKSRKEPVYTGELDPVVGFASRGSILPARGSRGVPVVSVNVPEVDVEFMRVREKALPAFLARYHKAGQRSSWELSNQGNSRKRLSELADPVYVTRFVLDGKKNERALTYLPIQNIRELREPGLYFAVMKPTGSFSDAFETAFFSVSNIGLHARAYKDKLFVHTASLRSGNPYKQVDLLVLDAKGETVLQGATDDNGNALLNYTLNAGHVLVSRNGRDISILPFNQPALDLSEFAVAGRENPWFDVFAWSGRDLYRPGEMLRISALLRDRDGKPVKPQPVFLRLKQPDGKTFRETRLQPAEQGYLEFTQKIPSDAPTGRWRVEFRTDPASKEAVQGLAVRVEEFLPERMKLELSSAQPVLRAKAPFTLTADAAYLYGAPAAGNRFTANLAVAVEQHPLDNMPGWFFGDATLQLPRGAKETIDITLGADGHLVHDIVLPEEAKPVSPMAVVVSGSVYESGGRPVTRSLKRVLWPADALVGVRPLFDVASGADANGMARFELTRVGVDGKPQSAKGLKATLVRELRDYHWRYSDGRWDYDFTRRFENKETRTVDISSSHTTTLSLPVEWGDYWLEVFDPVTGLTMRYPFRAGWSWGDDNRGLDARPDKVKLALDKTSYRAGDTLKVTITPPHPGKGLLLVESDKPLYVQAIDANPSTTLEIPVTADWERHDVYVTALVFRGGSASNNTTPARAVGEAYVPMQRKERRVAVGLVVPKQVRPAQSLPVTVSVPELAGKQAHVTISAVDAGILNITGFPVPDAAAHFFAQRRLSVDAYDIYGRVIESFEGGTGRLKFGGDMALPPLPQAKRPTARSQTVDLFSGAVKLDAKGNAHIQLPVPDFNGALRVSALVYSDTRYGQRDAETVVRAPILAEASMPRVMAPGDRSTVTVDVQNFTGKQGKFAVKVEGVGPLVVAEAGRSVTLGIDGKTTLNFPLRALEGNSVAQVRVRVEGNGSKAERHYDLPVRAVWPQGLRTQAHVLNVLAPIAFDPALAKGLMPDSVNARLSVSTLAPIPFASVLQGVFEYPYGCAEQTASKGYAALWLDDATIRSLGIQGVTPAQRLERLEGALGRLASLQTTNGHFSMWGGNSDVNPVLTPYIAGFLLDAKDAGFAVSDAVLQKALNRLSEDLLSGAHLFYGNDQSEALMFAHQAWSGYVLARVNRAPLGTLRTLYDNERGKAVSGLSLVHLGVALSLQGDRKRGEAAIEAGFAKSEGGRPEVFGDYGSVIRDNALMIALVRAHGLAKPAYEARVMALGRDLQARRRSGWLWLSTQEQVALAQLGRALLVDQKKQVSGTLYVGKQREDIAASRLIGRSFDAAALARGVRFVPQGDVPLYASFEVAGIPRQAPVSDDSQLLVVRRWYTVDGKPWTPGPLKEGQALIVRVSVTSKQNMPDALLTDLLPAGLEIENFNLGETRQWADVTVDGIALSERADAADIKHEEFRDDRYVAMLQLTGGRTANLFYLVRAVTPGSYNVPPSLVEDMYRPALRGTGRVAPAMVTVVQP.

An N-terminal signal peptide occupies residues 1 to 31 (MRDRVAMMLRPLVRGWIPRAVLLLTVAFSFG). C32 carries N-palmitoyl cysteine lipidation. C32 carries the S-diacylglycerol cysteine lipid modification. A cross-link (isoglutamyl cysteine thioester (Cys-Gln)) is located at residues 1166–1169 (CAEQ).

This sequence belongs to the protease inhibitor I39 (alpha-2-macroglobulin) family. Bacterial alpha-2-macroglobulin subfamily.

Its subcellular location is the cell membrane. Its function is as follows. Protects the bacterial cell from host peptidases. The chain is Alpha-2-macroglobulin from Xylella fastidiosa (strain Temecula1 / ATCC 700964).